A 250-amino-acid polypeptide reads, in one-letter code: Coproheme decarboxylase (250 aa).

Fe-coproporphyrin III is bound by residues arginine 131, 145–149 (YPMNK), histidine 172, and glutamine 185. Tyrosine 145 is a catalytic residue.

Belongs to the ChdC family. Type 1 subfamily. It depends on Fe-coproporphyrin III as a cofactor.

It carries out the reaction Fe-coproporphyrin III + 2 H2O2 + 2 H(+) = heme b + 2 CO2 + 4 H2O. The catalysed reaction is Fe-coproporphyrin III + H2O2 + H(+) = harderoheme III + CO2 + 2 H2O. The enzyme catalyses harderoheme III + H2O2 + H(+) = heme b + CO2 + 2 H2O. It functions in the pathway porphyrin-containing compound metabolism; protoheme biosynthesis. In terms of biological role, involved in coproporphyrin-dependent heme b biosynthesis. Catalyzes the decarboxylation of Fe-coproporphyrin III (coproheme) to heme b (protoheme IX), the last step of the pathway. The reaction occurs in a stepwise manner with a three-propionate intermediate. The sequence is that of Coproheme decarboxylase from Staphylococcus aureus (strain Mu50 / ATCC 700699).